Consider the following 390-residue polypeptide: Serine/threonine/tyrosine-protein kinase HT1 (390 aa).

One can recognise a Protein kinase domain in the interval 86-359 (LFIGNKFASG…GLPLTSHASL (274 aa)). ATP-binding positions include 92-100 (FASGAHSRI) and K113. D212 acts as the Proton acceptor in catalysis.

It belongs to the protein kinase superfamily. Ser/Thr protein kinase family. Interacts with DTX56. Binds to MPK4 and MPK12. Associates to CBC1 and CBC2. Autophosphorylated. As to expression, mainly localizes in guard cells. Expressed at low level in leaves, stems, roots and flowers.

It is found in the cell membrane. It carries out the reaction L-seryl-[protein] + ATP = O-phospho-L-seryl-[protein] + ADP + H(+). The catalysed reaction is L-threonyl-[protein] + ATP = O-phospho-L-threonyl-[protein] + ADP + H(+). It catalyses the reaction L-tyrosyl-[protein] + ATP = O-phospho-L-tyrosyl-[protein] + ADP + H(+). With respect to regulation, inhibited by MPK4 and MPK12. Its function is as follows. Serine/threonine/tyrosine kinase involved in the control of stomatal movement in response to CO(2). Functions as a major negative regulator of CO(2)-induced stomatal closing. Does not seem to be involved in stomatal closure in response to abscisic acid (ABA) or light. Involved in the control of red light-induced stomatal opening. Is epistatic to SRK2E/OST1 function during stomatal responses to red light and altered CO(2). Phosphorylates SRK2E/OST1 and GHR1 to prevents SRK2E/OST1- and GHR1-induced activation of SLAC1, thus preventing stomatal closure. Mediates the phosphorylation of CBC1 and CBC2. This Arabidopsis thaliana (Mouse-ear cress) protein is Serine/threonine/tyrosine-protein kinase HT1.